The primary structure comprises 92 residues: Alpha-conotoxin-like Rt20.1 (92 aa).

The first 24 residues, 1–24 (MPKLEMMLLVLLILPLSYFSAAGG), serve as a signal peptide directing secretion. A propeptide spanning residues 25–45 (QVVQGDLRSDVLARYLQRGDR) is cleaved from the precursor. At Glu-49 the chain carries 4-carboxyglutamate. Residue Pro-55 is modified to 4-hydroxyproline. Cystine bridges form between Cys-63-Cys-72, Cys-68-Cys-80, Cys-73-Cys-90, and Cys-78-Cys-92.

It belongs to the conotoxin D superfamily. In terms of assembly, hetero-, homo- or pseudo-homodimer (identical sequence, different post-translational modifications). As to expression, expressed by the venom duct.

Its subcellular location is the secreted. In terms of biological role, alpha-conotoxins act on postsynaptic membranes, they bind to the nicotinic acetylcholine receptors (nAChR) and thus inhibit them. Through its two C-terminal domains, this homodimeric protein would bind to two nAChR allosteric sites, located outside the nAChR C-loop of the principal binding face and at the adjacent binding interface in a clockwise direction. This toxin specifically blocks mammalian neuronal nAChR of the alpha-7/CHRNA7, alpha-3-beta-2/CHRNA3-CHRNB2 and alpha-4-beta-2/CHRNA4-CHRNB2 subtypes. The sequence is that of Alpha-conotoxin-like Rt20.1 from Conus rattus (Rat cone).